The following is a 495-amino-acid chain: Probable cytosol aminopeptidase (495 aa).

Mn(2+)-binding residues include Lys258 and Asp263. Lys270 is a catalytic residue. Residues Asp281, Asp340, and Glu342 each contribute to the Mn(2+) site. The active site involves Arg344.

The protein belongs to the peptidase M17 family. Requires Mn(2+) as cofactor.

The protein resides in the cytoplasm. It carries out the reaction Release of an N-terminal amino acid, Xaa-|-Yaa-, in which Xaa is preferably Leu, but may be other amino acids including Pro although not Arg or Lys, and Yaa may be Pro. Amino acid amides and methyl esters are also readily hydrolyzed, but rates on arylamides are exceedingly low.. The enzyme catalyses Release of an N-terminal amino acid, preferentially leucine, but not glutamic or aspartic acids.. Functionally, presumably involved in the processing and regular turnover of intracellular proteins. Catalyzes the removal of unsubstituted N-terminal amino acids from various peptides. The protein is Probable cytosol aminopeptidase of Leptospira interrogans serogroup Icterohaemorrhagiae serovar copenhageni (strain Fiocruz L1-130).